The sequence spans 131 residues: Putative pre-16S rRNA nuclease (131 aa).

It belongs to the YqgF nuclease family.

The protein resides in the cytoplasm. Functionally, could be a nuclease involved in processing of the 5'-end of pre-16S rRNA. The polypeptide is Putative pre-16S rRNA nuclease (Bordetella petrii (strain ATCC BAA-461 / DSM 12804 / CCUG 43448)).